Here is a 239-residue protein sequence, read N- to C-terminus: Protein canopy homolog 4 (239 aa).

Residues 1–20 (MGPVRLGTLLFILTVYGAWA) form the signal peptide. Cystine bridges form between C37–C195, C40–C183, and C93–C155. The interval 199-239 (TWTGKEKITDGQEKTEEEEQDQEEEEMTNTPVHSQHDPEDL) is disordered. Over residues 201–212 (TGKEKITDGQEK) the composition is skewed to basic and acidic residues. Positions 213–225 (TEEEEQDQEEEEM) are enriched in acidic residues.

This sequence belongs to the canopy family. In terms of assembly, interacts with TLR4.

It localises to the secreted. Functionally, plays a role in the regulation of the cell surface expression of TLR4. The chain is Protein canopy homolog 4 (CNPY4) from Bos taurus (Bovine).